We begin with the raw amino-acid sequence, 158 residues long: Transcriptional repressor NrdR (158 aa).

The segment at 3–34 (CPSCQNTDSRVLESRAADGGRSVRRRRECLNC) is a zinc-finger region. An ATP-cone domain is found at 49-139 (ITVIKRDGCR…VYRQFRGIDD (91 aa)).

This sequence belongs to the NrdR family. The cofactor is Zn(2+).

Functionally, negatively regulates transcription of bacterial ribonucleotide reductase nrd genes and operons by binding to NrdR-boxes. This chain is Transcriptional repressor NrdR, found in Synechococcus sp. (strain CC9902).